Consider the following 504-residue polypeptide: Maturase K (504 aa).

This sequence belongs to the intron maturase 2 family. MatK subfamily.

It is found in the plastid. It localises to the chloroplast. Functionally, usually encoded in the trnK tRNA gene intron. Probably assists in splicing its own and other chloroplast group II introns. The sequence is that of Maturase K from Betula papyrifera (Paper birch).